The primary structure comprises 261 residues: Enolase-phosphatase E1 (261 aa).

Residues D16 and E18 each coordinate Mg(2+). Substrate contacts are provided by residues 153–154 and K187; that span reads SS. Residue D212 coordinates Mg(2+).

It belongs to the HAD-like hydrolase superfamily. MasA/MtnC family. In terms of assembly, monomer. Mg(2+) is required as a cofactor.

The protein resides in the cytoplasm. The protein localises to the nucleus. It catalyses the reaction 5-methylsulfanyl-2,3-dioxopentyl phosphate + H2O = 1,2-dihydroxy-5-(methylsulfanyl)pent-1-en-3-one + phosphate. The protein operates within amino-acid biosynthesis; L-methionine biosynthesis via salvage pathway; L-methionine from S-methyl-5-thio-alpha-D-ribose 1-phosphate: step 3/6. It functions in the pathway amino-acid biosynthesis; L-methionine biosynthesis via salvage pathway; L-methionine from S-methyl-5-thio-alpha-D-ribose 1-phosphate: step 4/6. Bifunctional enzyme that catalyzes the enolization of 2,3-diketo-5-methylthiopentyl-1-phosphate (DK-MTP-1-P) into the intermediate 2-hydroxy-3-keto-5-methylthiopentenyl-1-phosphate (HK-MTPenyl-1-P), which is then dephosphorylated to form the acireductone 1,2-dihydroxy-3-keto-5-methylthiopentene (DHK-MTPene). This Homo sapiens (Human) protein is Enolase-phosphatase E1.